The chain runs to 76 residues: Centromere protein W (76 aa).

This sequence belongs to the CENP-W/WIP1 family. In terms of assembly, heterodimer with CENPT; this dimer coassembles with CENPS-CENPX heterodimers at centromeres to form the tetrameric CENP-T-W-S-X complex, which is a subcomplex of the large constitutive centromere-associated network (CCAN, also known as the interphase centromere complex or ICEN). Interacts with NPM1.

Its subcellular location is the nucleus. The protein resides in the chromosome. The protein localises to the centromere. It is found in the kinetochore. Functionally, component of the CENPA-NAC (nucleosome-associated) complex, a complex that plays a central role in assembly of kinetochore proteins, mitotic progression and chromosome segregation. The CENPA-NAC complex recruits the CENPA-CAD (nucleosome distal) complex and may be involved in incorporation of newly synthesized CENPA into centromeres. Part of a nucleosome-associated complex that binds specifically to histone H3-containing nucleosomes at the centromere, as opposed to nucleosomes containing CENPA. Component of the heterotetrameric CENP-T-W-S-X complex that binds and supercoils DNA, and plays an important role in kinetochore assembly. CENPW has a fundamental role in kinetochore assembly and function. It is one of the inner kinetochore proteins, with most further proteins binding downstream. Required for normal chromosome organization and normal progress through mitosis. This Gallus gallus (Chicken) protein is Centromere protein W (CENPW).